We begin with the raw amino-acid sequence, 508 residues long: Steroid 17-alpha-hydroxylase/17,20 lyase (508 aa).

N202 lines the substrate pocket. C442 serves as a coordination point for heme.

The protein belongs to the cytochrome P450 family. Requires heme as cofactor.

Its subcellular location is the endoplasmic reticulum membrane. It is found in the microsome membrane. It carries out the reaction a C21-steroid + reduced [NADPH--hemoprotein reductase] + O2 = a 17alpha-hydroxy-C21-steroid + oxidized [NADPH--hemoprotein reductase] + H2O + H(+). The catalysed reaction is progesterone + reduced [NADPH--hemoprotein reductase] + O2 = 17alpha-hydroxyprogesterone + oxidized [NADPH--hemoprotein reductase] + H2O + H(+). The enzyme catalyses pregnenolone + reduced [NADPH--hemoprotein reductase] + O2 = 17alpha-hydroxypregnenolone + oxidized [NADPH--hemoprotein reductase] + H2O + H(+). It catalyses the reaction 17alpha-hydroxyprogesterone + reduced [NADPH--hemoprotein reductase] + O2 = androst-4-ene-3,17-dione + acetate + oxidized [NADPH--hemoprotein reductase] + H2O + 2 H(+). It carries out the reaction 17alpha-hydroxyprogesterone + reduced [NADPH--hemoprotein reductase] + O2 = 16alpha,17alpha-dihydroxyprogesterone + oxidized [NADPH--hemoprotein reductase] + H2O + H(+). The catalysed reaction is 16alpha,17alpha-dihydroxyprogesterone + reduced [NADPH--hemoprotein reductase] + O2 = 6beta,16alpha,17alpha-trihydroxyprogesterone + oxidized [NADPH--hemoprotein reductase] + H2O + H(+). The enzyme catalyses 17alpha-hydroxypregnenolone + reduced [NADPH--hemoprotein reductase] + O2 = 3beta-hydroxyandrost-5-en-17-one + acetate + oxidized [NADPH--hemoprotein reductase] + H2O + 2 H(+). It catalyses the reaction 16alpha,17alpha-dihydroxypregnenolone + reduced [NADPH--hemoprotein reductase] + O2 = 3beta,16alpha-dihydroxy-androst-5-en-17-one + acetate + oxidized [NADPH--hemoprotein reductase] + H2O + 2 H(+). It carries out the reaction 3beta-hydroxyandrost-5-en-17-one + reduced [NADPH--hemoprotein reductase] + O2 = 3beta,16alpha-dihydroxy-androst-5-en-17-one + oxidized [NADPH--hemoprotein reductase] + H2O + H(+). The catalysed reaction is androst-4-ene-3,17-dione + reduced [NADPH--hemoprotein reductase] + O2 = 16alpha-hydroxyandrost-4-ene-3,17-dione + oxidized [NADPH--hemoprotein reductase] + H2O + H(+). It participates in steroid hormone biosynthesis. It functions in the pathway steroid biosynthesis; glucocorticoid biosynthesis. Its activity is regulated as follows. Regulated predominantly by intracellular cAMP levels. The 17,20-lyase activity is stimulated by cytochrome b5, which acts as an allosteric effector increasing the Vmax of the lyase activity. A cytochrome P450 monooxygenase involved in corticoid and androgen biosynthesis. Catalyzes 17-alpha hydroxylation of C21 steroids, which is common for both pathways. A second oxidative step, required only for androgen synthesis, involves an acyl-carbon cleavage. The 17-alpha hydroxy intermediates, as part of adrenal glucocorticoids biosynthesis pathway, are precursors of cortisol. Hydroxylates steroid hormones, pregnenolone and progesterone to form 17-alpha hydroxy metabolites, followed by the cleavage of the C17-C20 bond to form C19 steroids, dehydroepiandrosterone (DHEA) and androstenedione. Has 16-alpha hydroxylase activity. Catalyzes 16-alpha hydroxylation of 17-alpha hydroxy pregnenolone, followed by the cleavage of the C17-C20 bond to form 16-alpha-hydroxy DHEA. Also 16-alpha hydroxylates androgens, relevant for estriol synthesis. Mechanistically, uses molecular oxygen inserting one oxygen atom into a substrate, and reducing the second into a water molecule, with two electrons provided by NADPH via cytochrome P450 reductase (CPR; NADPH-ferrihemoprotein reductase). This is Steroid 17-alpha-hydroxylase/17,20 lyase (CYP17A1) from Pan troglodytes (Chimpanzee).